The chain runs to 422 residues: L-2-hydroxyglutarate dehydrogenase (422 aa).

The protein belongs to the L2HGDH family. Requires FAD as cofactor.

The protein localises to the cell inner membrane. The enzyme catalyses (S)-2-hydroxyglutarate + a quinone = a quinol + 2-oxoglutarate. It functions in the pathway amino-acid degradation. Its function is as follows. Catalyzes the dehydrogenation of L-2-hydroxyglutarate (L2HG) to alpha-ketoglutarate and couples to the respiratory chain by feeding electrons from the reaction into the membrane quinone pool. Functions in a L-lysine degradation pathway that proceeds via cadaverine, glutarate and L-2-hydroxyglutarate. Also displays some oxidase activity in vitro on L-2-hydroxyglutarate with O2 as the electron acceptor, but this activity is most likely not physiological. This is L-2-hydroxyglutarate dehydrogenase from Escherichia coli O17:K52:H18 (strain UMN026 / ExPEC).